The primary structure comprises 396 residues: Acetate kinase (396 aa).

Asn-8 serves as a coordination point for Mg(2+). An ATP-binding site is contributed by Lys-15. Residue Arg-89 coordinates substrate. Asp-146 acts as the Proton donor/acceptor in catalysis. ATP is bound by residues 206–210, 283–285, and 331–335; these read HIGNG, DMR, and GVGEN. A Mg(2+)-binding site is contributed by Glu-383.

Belongs to the acetokinase family. Homodimer. Requires Mg(2+) as cofactor. It depends on Mn(2+) as a cofactor.

The protein resides in the cytoplasm. It carries out the reaction acetate + ATP = acetyl phosphate + ADP. It participates in metabolic intermediate biosynthesis; acetyl-CoA biosynthesis; acetyl-CoA from acetate: step 1/2. Functionally, catalyzes the formation of acetyl phosphate from acetate and ATP. Can also catalyze the reverse reaction. The sequence is that of Acetate kinase from Streptococcus pneumoniae (strain 70585).